The following is a 349-amino-acid chain: 4-hydroxy-3-methylbut-2-en-1-yl diphosphate synthase (flavodoxin) (349 aa).

[4Fe-4S] cluster-binding residues include cysteine 264, cysteine 267, cysteine 299, and glutamate 306.

It belongs to the IspG family. [4Fe-4S] cluster is required as a cofactor.

The catalysed reaction is (2E)-4-hydroxy-3-methylbut-2-enyl diphosphate + oxidized [flavodoxin] + H2O + 2 H(+) = 2-C-methyl-D-erythritol 2,4-cyclic diphosphate + reduced [flavodoxin]. It participates in isoprenoid biosynthesis; isopentenyl diphosphate biosynthesis via DXP pathway; isopentenyl diphosphate from 1-deoxy-D-xylulose 5-phosphate: step 5/6. Its function is as follows. Converts 2C-methyl-D-erythritol 2,4-cyclodiphosphate (ME-2,4cPP) into 1-hydroxy-2-methyl-2-(E)-butenyl 4-diphosphate. The chain is 4-hydroxy-3-methylbut-2-en-1-yl diphosphate synthase (flavodoxin) from Clostridium acetobutylicum (strain ATCC 824 / DSM 792 / JCM 1419 / IAM 19013 / LMG 5710 / NBRC 13948 / NRRL B-527 / VKM B-1787 / 2291 / W).